We begin with the raw amino-acid sequence, 474 residues long: MMEEDIGDTEQWRHVFQELMQEVKPWHKWTLIPDKNLLPNVLKPGWTQYQQKTFARFHCPSCSRSWASGRVLIVFHMRWCEKKAKGWVKMRVFAQRCNQCPEPPFATPEVTWDNISRILNNLLFQILKKCYKEGFKQMGEIPLLGNTSLEGPHDSSNCEACLLGFCAQNDLGQASKPPAPPLSPTSSKSAREPKVTVTCSNISSSRPSSKVQMPQASKVNPQASNPTKNDPKVSCTSKPPAPPLSPTSLKSAREPKVTVTCSNISSSRPSSKVQMPQASKVNPQTSNPTKNDPKISCTSKPSTTPRLTIQQLSVVSPPAPAPTCVIQMPSPTPIDGSRAADVAKENTRSKTPKALLSSPLYVPPTSSYVPPTSSYVPPTSSYVPPTSSYVPPTSSSVIVPISSSWRLPENTICQVERNSHIHPQSQSSCCGACCESWCEIFRYSCCEAACNCMSQSPLCCLAFLILFLLLWYLL.

Topologically, residues 1–453 (MMEEDIGDTE…SCCEAACNCM (453 aa)) are cytoplasmic. The 3CxxC-type zinc finger occupies 53–164 (TFARFHCPSC…SSNCEACLLG (112 aa)). Residues 175 to 304 (SKPPAPPLSP…ISCTSKPSTT (130 aa)) form a disordered region. Polar residues-rich tracts occupy residues 197-228 (VTCS…NPTK) and 259-304 (VTCS…PSTT). Residues 454-474 (SQSPLCCLAFLILFLLLWYLL) traverse the membrane as a helical segment.

It belongs to the TMEM7 family. In terms of assembly, interacts with TAS2R16. As to expression, expressed predominantly in the liver. Not detected in the olfactory epithelium.

The protein resides in the membrane. Promotes functional cell surface expression of the bitter taste receptors TAS2R16 and TAS2R43. In Mus musculus (Mouse), this protein is Receptor-transporting protein 3 (Rtp3).